The chain runs to 242 residues: ATP synthase subunit a (242 aa).

Helical transmembrane passes span 21 to 41, 83 to 103, 118 to 137, 175 to 195, and 198 to 218; these read LASV…AIVC, AVTL…FAIV, ATVT…YYGI, LYGN…LFFE, and AWGW…SIFV.

It belongs to the ATPase A chain family. As to quaternary structure, F-type ATPases have 2 components, CF(1) - the catalytic core - and CF(0) - the membrane proton channel. CF(1) has five subunits: alpha(3), beta(3), gamma(1), delta(1), epsilon(1). CF(0) has three main subunits: a(1), b(2) and c(9-12). The alpha and beta chains form an alternating ring which encloses part of the gamma chain. CF(1) is attached to CF(0) by a central stalk formed by the gamma and epsilon chains, while a peripheral stalk is formed by the delta and b chains.

It localises to the cell membrane. Its function is as follows. Key component of the proton channel; it plays a direct role in the translocation of protons across the membrane. This chain is ATP synthase subunit a, found in Staphylococcus epidermidis (strain ATCC 35984 / DSM 28319 / BCRC 17069 / CCUG 31568 / BM 3577 / RP62A).